The following is an 88-amino-acid chain: Large ribosomal subunit protein bL27 (88 aa).

The interval 1–24 (MATKKSGGSSGNGRDSRGRRLGVK) is disordered.

It belongs to the bacterial ribosomal protein bL27 family.

This Ehrlichia canis (strain Jake) protein is Large ribosomal subunit protein bL27.